The sequence spans 225 residues: tRNA (guanine-N(7)-)-methyltransferase (225 aa).

Positions 56, 81, 108, and 131 each coordinate S-adenosyl-L-methionine. Residue aspartate 131 is part of the active site. Substrate is bound by residues lysine 135, aspartate 167, and 204–207 (TKFE).

Belongs to the class I-like SAM-binding methyltransferase superfamily. TrmB family.

The enzyme catalyses guanosine(46) in tRNA + S-adenosyl-L-methionine = N(7)-methylguanosine(46) in tRNA + S-adenosyl-L-homocysteine. Its pathway is tRNA modification; N(7)-methylguanine-tRNA biosynthesis. In terms of biological role, catalyzes the formation of N(7)-methylguanine at position 46 (m7G46) in tRNA. In Legionella pneumophila (strain Lens), this protein is tRNA (guanine-N(7)-)-methyltransferase.